Reading from the N-terminus, the 524-residue chain is Xanthotoxin 5-hydroxylase CYP82C4 (524 aa).

The chain crosses the membrane as a helical span at residues 1–21 (MDTSLFSLFVPILVFVFIALF). Position 463 (Cys-463) interacts with heme.

The protein belongs to the cytochrome P450 family. Heme is required as a cofactor. In terms of tissue distribution, expressed in both primary and lateral roots under iron-deficient conditions, except in apical root zones, and mostly in the root epidermal layer.

It localises to the membrane. The enzyme catalyses fraxetin + reduced [NADPH--hemoprotein reductase] + O2 = sideretin (reduced form) + oxidized [NADPH--hemoprotein reductase] + H2O + H(+). It carries out the reaction xanthotoxin + reduced [NADPH--hemoprotein reductase] + O2 = 5-hydroxyxanthotoxin + oxidized [NADPH--hemoprotein reductase] + H2O + 2 H(+). Its pathway is phenylpropanoid metabolism. In terms of biological role, can hydroxylate xanthotoxin (8-methoxypsoralen) to form 5-hydroxyxanthotoxin (5-hydroxy-8-methoxypsoralen) in vivo and in vitro. Involved in the early iron deficiency response, possibly through an IDE1-like mediated pathway. Involved in the pathway of sideretin biosynthesis from feruloyl CoA, a redox-active catecholic metabolite exuded by roots in response to iron deficiency in order to facilitate the uptake of iron; this pathway consists in the successive conversion from feruloyl CoA to scopoletin, from scopoletin to fraxetin and from fraxetin to sideretin. Catalyzes the biosynthesis of sideretin via fraxetin hydroxylation. In Arabidopsis thaliana (Mouse-ear cress), this protein is Xanthotoxin 5-hydroxylase CYP82C4.